Here is a 390-residue protein sequence, read N- to C-terminus: GTPase Obg (390 aa).

The Obg domain maps to M1 to L159. One can recognise an OBG-type G domain in the interval A160–E333. Residues G166–S173, F191–I195, D213–G216, N283–D286, and S314–V316 contribute to the GTP site. 2 residues coordinate Mg(2+): S173 and T193.

The protein belongs to the TRAFAC class OBG-HflX-like GTPase superfamily. OBG GTPase family. Monomer. Mg(2+) is required as a cofactor.

Its subcellular location is the cytoplasm. Functionally, an essential GTPase which binds GTP, GDP and possibly (p)ppGpp with moderate affinity, with high nucleotide exchange rates and a fairly low GTP hydrolysis rate. Plays a role in control of the cell cycle, stress response, ribosome biogenesis and in those bacteria that undergo differentiation, in morphogenesis control. This Vibrio atlanticus (strain LGP32) (Vibrio splendidus (strain Mel32)) protein is GTPase Obg.